The following is a 513-amino-acid chain: ATP synthase subunit alpha (513 aa).

169–176 lines the ATP pocket; the sequence is GDRQTGKT.

The protein belongs to the ATPase alpha/beta chains family. F-type ATPases have 2 components, CF(1) - the catalytic core - and CF(0) - the membrane proton channel. CF(1) has five subunits: alpha(3), beta(3), gamma(1), delta(1), epsilon(1). CF(0) has three main subunits: a(1), b(2) and c(9-12). The alpha and beta chains form an alternating ring which encloses part of the gamma chain. CF(1) is attached to CF(0) by a central stalk formed by the gamma and epsilon chains, while a peripheral stalk is formed by the delta and b chains.

The protein localises to the cell inner membrane. It carries out the reaction ATP + H2O + 4 H(+)(in) = ADP + phosphate + 5 H(+)(out). Produces ATP from ADP in the presence of a proton gradient across the membrane. The alpha chain is a regulatory subunit. This chain is ATP synthase subunit alpha, found in Halorhodospira halophila (strain DSM 244 / SL1) (Ectothiorhodospira halophila (strain DSM 244 / SL1)).